The primary structure comprises 201 residues: Large ribosomal subunit protein uL4 (201 aa).

Positions 45-66 (AQLTRSEVSGGGKKPWRQKGTG) are disordered.

The protein belongs to the universal ribosomal protein uL4 family. As to quaternary structure, part of the 50S ribosomal subunit.

One of the primary rRNA binding proteins, this protein initially binds near the 5'-end of the 23S rRNA. It is important during the early stages of 50S assembly. It makes multiple contacts with different domains of the 23S rRNA in the assembled 50S subunit and ribosome. In terms of biological role, forms part of the polypeptide exit tunnel. The polypeptide is Large ribosomal subunit protein uL4 (Aeromonas hydrophila subsp. hydrophila (strain ATCC 7966 / DSM 30187 / BCRC 13018 / CCUG 14551 / JCM 1027 / KCTC 2358 / NCIMB 9240 / NCTC 8049)).